We begin with the raw amino-acid sequence, 595 residues long: Elongation factor 4 (595 aa).

In terms of domain architecture, tr-type G spans 2–183 (KNIRNFCIIA…AIVEQVPAPA (182 aa)). GTP is bound by residues 14-19 (DHGKST) and 130-133 (NKVD).

It belongs to the TRAFAC class translation factor GTPase superfamily. Classic translation factor GTPase family. LepA subfamily.

The protein resides in the cell inner membrane. The catalysed reaction is GTP + H2O = GDP + phosphate + H(+). Required for accurate and efficient protein synthesis under certain stress conditions. May act as a fidelity factor of the translation reaction, by catalyzing a one-codon backward translocation of tRNAs on improperly translocated ribosomes. Back-translocation proceeds from a post-translocation (POST) complex to a pre-translocation (PRE) complex, thus giving elongation factor G a second chance to translocate the tRNAs correctly. Binds to ribosomes in a GTP-dependent manner. The protein is Elongation factor 4 of Porphyromonas gingivalis (strain ATCC 33277 / DSM 20709 / CIP 103683 / JCM 12257 / NCTC 11834 / 2561).